Reading from the N-terminus, the 1287-residue chain is DENN domain-containing protein 5A (1287 aa).

A uDENN domain is found at 57 to 259; it reads STTEGENFEQ…EVPLPPPGRS (203 aa). Ser193 is subject to Phosphoserine. In terms of domain architecture, cDENN spans 278-414; the sequence is ELPLFDFPVK…LEFVQEVSEI (137 aa). The region spanning 416–598 is the dDENN domain; sequence MAFGVPPEGN…IMCHDDDDKD (183 aa). The RUN 1 domain occupies 787–950; the sequence is VEENTLIASL…DYFCFTNVFT (164 aa). In terms of domain architecture, PLAT spans 954–1062; that stretch reads IPYHILIVPS…DDGSLERVLV (109 aa). Thr1079 is subject to Phosphothreonine. Phosphoserine is present on residues Ser1085, Ser1087, and Ser1096. In terms of domain architecture, RUN 2 spans 1134-1280; the sequence is TLLLCGECGL…QEFNITLDTS (147 aa).

Belongs to the RAB6IP1 family. In terms of assembly, interacts with RAB6A bound to GTP. Expressed in developing brain and developing neurons.

The protein localises to the golgi apparatus membrane. In terms of biological role, guanine nucleotide exchange factor (GEF) which may activate RAB6A and RAB39A and/or RAB39B. Promotes the exchange of GDP to GTP, converting inactive GDP-bound Rab proteins into their active GTP-bound form. Involved in the negative regulation of neurite outgrowth. This chain is DENN domain-containing protein 5A (Dennd5a), found in Rattus norvegicus (Rat).